We begin with the raw amino-acid sequence, 498 residues long: MSTSKSENYLSELRKIIWPIEQHENKKFLPLAFMMFCILLNYSTLRSIKDGFVVTDIGTESISFLKTYIVLPSAVIAMVIYVKLCDILKQENIFYVITSFFLGYFALFAFVLYPYPDLVHPDHKTIESLSLAYPNFKWFIKIVGKWSFASFYTIAELWGTMMLSLLFWQFANQITKITEAKRFYSMFGLLANLALPVTSVVIGYFLHEKTQIVSEHLKFIPLFVIMITSSFLIILTYRWMNKNVLTDPRLYDPTLVKEKKAKAKLSFIESFKMIFTSKYVGYIALLIIAYGVSVNLVEGVWKSKVKELYPTKEAYTIYMGQFQFYQGWVAIAFMLIGSNILRKVSWLTAAMITPLMMFITGAAFFSFIFFDSVIAMNLTGILASSPLTLAVMFGMIQNVLSKGVKYSLFDATKNMAYIPLDKDLRVKGQAAVEVIGGRLGKSGGAIIQSTFFILFPAFGFIEATPYFASIFFIIVILWIFAVKGLNKEYQVLVNKNEN.

Over 1–33 (MSTSKSENYLSELRKIIWPIEQHENKKFLPLAF) the chain is Cytoplasmic. Residues 34–54 (MMFCILLNYSTLRSIKDGFVV) traverse the membrane as a helical segment. A disulfide bridge connects residues cysteine 37 and cysteine 85. Topologically, residues 55-67 (TDIGTESISFLKT) are extracellular. A helical transmembrane segment spans residues 68–88 (YIVLPSAVIAMVIYVKLCDIL). Over 89–92 (KQEN) the chain is Cytoplasmic. Residues 93 to 113 (IFYVITSFFLGYFALFAFVLY) form a helical membrane-spanning segment. Over 114–147 (PYPDLVHPDHKTIESLSLAYPNFKWFIKIVGKWS) the chain is Extracellular. Residues 148–168 (FASFYTIAELWGTMMLSLLFW) traverse the membrane as a helical segment. Topologically, residues 169-184 (QFANQITKITEAKRFY) are cytoplasmic. The chain crosses the membrane as a helical span at residues 185–205 (SMFGLLANLALPVTSVVIGYF). At 206–218 (LHEKTQIVSEHLK) the chain is on the extracellular side. A helical transmembrane segment spans residues 219–239 (FIPLFVIMITSSFLIILTYRW). The Cytoplasmic portion of the chain corresponds to 240–279 (MNKNVLTDPRLYDPTLVKEKKAKAKLSFIESFKMIFTSKY). Residues 280–300 (VGYIALLIIAYGVSVNLVEGV) form a helical membrane-spanning segment. The Extracellular segment spans residues 301–320 (WKSKVKELYPTKEAYTIYMG). Residues 321–341 (QFQFYQGWVAIAFMLIGSNIL) form a helical membrane-spanning segment. The Cytoplasmic segment spans residues 342–348 (RKVSWLT). Residues 349–369 (AAMITPLMMFITGAAFFSFIF) form a helical membrane-spanning segment. Topologically, residues 370 to 379 (FDSVIAMNLT) are extracellular. Residues 380 to 400 (GILASSPLTLAVMFGMIQNVL) form a helical membrane-spanning segment. Over 401–438 (SKGVKYSLFDATKNMAYIPLDKDLRVKGQAAVEVIGGR) the chain is Cytoplasmic. 436 to 442 (GGRLGKS) serves as a coordination point for ATP. Residues 439–459 (LGKSGGAIIQSTFFILFPAFG) traverse the membrane as a helical segment. The Extracellular portion of the chain corresponds to 460–465 (FIEATP). A helical transmembrane segment spans residues 466-486 (YFASIFFIIVILWIFAVKGLN). Residues 487-498 (KEYQVLVNKNEN) lie on the Cytoplasmic side of the membrane.

The protein belongs to the ADP/ATP translocase tlc family.

The protein localises to the cell membrane. Functionally, provides the rickettsial cell with host ATP in exchange for rickettsial ADP. This is an obligate exchange system. This energy acquiring activity is an important component of rickettsial parasitism. This Rickettsia typhi (strain ATCC VR-144 / Wilmington) protein is ADP,ATP carrier protein 1 (tlcA).